The following is a 266-amino-acid chain: Uracil-DNA glycosylase (266 aa).

The interval 1-25 is disordered; it reads MTRRADPAQATLFDDDEPAGAPTAT. The active-site Proton acceptor is the Asp97.

Belongs to the uracil-DNA glycosylase (UDG) superfamily. UNG family.

The protein resides in the cytoplasm. The catalysed reaction is Hydrolyzes single-stranded DNA or mismatched double-stranded DNA and polynucleotides, releasing free uracil.. In terms of biological role, excises uracil residues from the DNA which can arise as a result of misincorporation of dUMP residues by DNA polymerase or due to deamination of cytosine. In Ralstonia nicotianae (strain ATCC BAA-1114 / GMI1000) (Ralstonia solanacearum), this protein is Uracil-DNA glycosylase.